A 354-amino-acid chain; its full sequence is Rhodopsin (354 aa).

Residues M1–A36 are Extracellular-facing. Residues N2 and N15 are each glycosylated (N-linked (GlcNAc...) asparagine). Residues Y37–V61 traverse the membrane as a helical segment. The Cytoplasmic portion of the chain corresponds to T62–N73. A helical transmembrane segment spans residues Y74–Y96. Residues T97–C110 are Extracellular-facing. Cysteines 110 and 187 form a disulfide. Residues N111 to V133 traverse the membrane as a helical segment. The short motif at E134 to W136 is the 'Ionic lock' involved in activated form stabilization element. At E134–H152 the chain is on the cytoplasmic side. Residues A153–L173 form a helical membrane-spanning segment. The Extracellular portion of the chain corresponds to G174–S202. A helical transmembrane segment spans residues F203 to G224. The Cytoplasmic portion of the chain corresponds to R225–R252. Residues M253–Y274 form a helical membrane-spanning segment. Residues I275 to L286 lie on the Extracellular side of the membrane. A helical membrane pass occupies residues F287–C308. An N6-(retinylidene)lysine modification is found at K296. Topologically, residues M309–A354 are cytoplasmic. 2 S-palmitoyl cysteine lipidation sites follow: C322 and C323. Residues G333–A354 are disordered. Residues A334–A354 show a composition bias toward low complexity.

This sequence belongs to the G-protein coupled receptor 1 family. Opsin subfamily. Post-translationally, phosphorylated on some or all of the serine and threonine residues present in the C-terminal region. In terms of processing, contains one covalently linked retinal chromophore.

It is found in the membrane. The protein localises to the cell projection. Its subcellular location is the cilium. The protein resides in the photoreceptor outer segment. In terms of biological role, photoreceptor required for image-forming vision at low light intensity. While most salt water fish species use retinal as chromophore, most freshwater fish use 3-dehydroretinal, or a mixture of retinal and 3-dehydroretinal. Light-induced isomerization of 11-cis to all-trans retinal triggers a conformational change that activates signaling via G-proteins. Subsequent receptor phosphorylation mediates displacement of the bound G-protein alpha subunit by arrestin and terminates signaling. The protein is Rhodopsin (rho) of Poecilia reticulata (Guppy).